Here is a 713-residue protein sequence, read N- to C-terminus: Segment polarity protein dishevelled homolog DVL-3 (713 aa).

The 82-residue stretch at 1-82 folds into the DIX domain; that stretch reads MGETKVIYHL…RVVCWLVSAD (82 aa). 2 stretches are compositionally biased toward polar residues: residues 87–98 and 118–127; these read DAGSVCADNQSD and HPNTRGSQEN. The interval 87 to 235 is disordered; sequence DAGSVCADNQ…PRIERSSSFS (149 aa). Residues 140-155 show a composition bias toward basic and acidic residues; the sequence is AHRERPRRKETPEHAT. A compositionally biased stretch (low complexity) spans 173 to 189; it reads ESSSTLMSSELDSTSFF. Residues 199–210 show a composition bias toward polar residues; it reads RFSNSTEQSSAS. Positions 212–225 are enriched in basic residues; that stretch reads LMRRHKRRRRKPKA. The 86-residue stretch at 248 to 333 folds into the PDZ domain; it reads TVTLNMEKYN…KPGPITLTVA (86 aa). Residues 421-495 enclose the DEP domain; sequence PESGLEVRDR…SEQCYYIFGD (75 aa). Residues 508 to 518 are compositionally biased toward polar residues; the sequence is HDGSSGTSDQD. 2 disordered regions span residues 508-527 and 545-652; these read HDGS…PHPG and YSPH…GPPG. Low complexity predominate over residues 564 to 579; sequence GSQHSEGSRSSGSNRS. 2 stretches are compositionally biased toward basic and acidic residues: residues 580–593 and 602–618; these read STEK…KGGD and ESDH…RAAS. Positions 629-646 are enriched in basic residues; sequence HRSHHSIAHSIRSHHTHH.

The protein belongs to the DSH family.

The protein resides in the cytoplasm. In terms of biological role, involved in the signal transduction pathway mediated by multiple Wnt genes. Required during ciliogenesis for the docking of basal bodies to the apical plasma membrane. The chain is Segment polarity protein dishevelled homolog DVL-3 from Xenopus tropicalis (Western clawed frog).